The primary structure comprises 330 residues: D-lactate dehydrogenase (330 aa).

Residues 155-156 (RI), aspartate 175, 206-207 (MP), asparagine 212, 233-235 (MAR), and aspartate 259 contribute to the NAD(+) site. Arginine 235 is a catalytic residue. Residue glutamate 264 is part of the active site. Catalysis depends on histidine 296, which acts as the Proton donor.

Belongs to the D-isomer specific 2-hydroxyacid dehydrogenase family.

The enzyme catalyses (R)-lactate + NAD(+) = pyruvate + NADH + H(+). This Streptococcus agalactiae serotype III (strain NEM316) protein is D-lactate dehydrogenase (ldhD).